We begin with the raw amino-acid sequence, 297 residues long: PDZ domain-containing protein GIPC3 (297 aa).

Residues glutamate 97–glutamine 177 form the PDZ domain.

It belongs to the GIPC family. In terms of tissue distribution, expressed in adult lung, brain and testis. In the inner ear, it is expressed in the inner and outer hair cells of the organ of Corti. Also expressed in cochlear spiral ganglion neurons.

Required for postnatal maturation of the hair bundle and long-term survival of hair cells and spiral ganglion. This chain is PDZ domain-containing protein GIPC3 (Gipc3), found in Mus musculus (Mouse).